Here is a 247-residue protein sequence, read N- to C-terminus: Cell division protein ZapD (247 aa).

Belongs to the ZapD family. Interacts with FtsZ.

The protein resides in the cytoplasm. Cell division factor that enhances FtsZ-ring assembly. Directly interacts with FtsZ and promotes bundling of FtsZ protofilaments, with a reduction in FtsZ GTPase activity. This Salmonella dublin (strain CT_02021853) protein is Cell division protein ZapD.